Reading from the N-terminus, the 644-residue chain is MYTSRSLFSTLASCLSLATLVASSPTTNQNLPSSKRDATVEQNVFFDINGKEVETRIAKLKAEGYRPTSLNIHGTPTDAKYAGIWIKQDGNPYETIVGANKTTYDAWLDQWKASGYVSTQVSATGPASNAVFAGVMEKIPSIRNWTQICGTSSPYAYLNATGDAPIVITGVSLYGTPTERQYCVLGHEDTDNHQQTVWFPTSSSQDYKTIEPAETTKRFWRPVFIDSSEDKLLASIFDDTSVGNWTVRTDLTASQLQSEITAQKANNMHPIHISGAGSTETQYVVIFTEQATPLERNWHAVGDITGFPDNARVKRDLDEILQKFMKRNSVRQAQVSASINGTVIASRAYTWAESNRAIVEPSDKFLLGSVSKAFTYAAVDHLVSTGVVNLTDHIYPLLGYTKPADPRSLNITIQHLLDHTGGFDRGMSPDIGFIFTTVAQSLNQSTPATLRQLIEYVLAKPLDFEPGTRSVYSNYGTLLLGYLIANKTGETYMSYLEKNVLKGLDVEMYTTPGADHTNDRIVQETKFTSISALTPLSEKRVANVYGGDGAVKEAAVSSFALKASADTVSRFIGKHAAYGLGPRQLFMYRDGTVAGARALAYSMAKLDWAITLNTREYLDENAWNTLVFTDLYQLWGALDSALPL.

Positions 1-23 (MYTSRSLFSTLASCLSLATLVAS) are cleaved as a signal peptide. N-linked (GlcNAc...) asparagine glycans are attached at residues Asn-100, Asn-144, Asn-159, Asn-244, and Asn-340. Cys-149 and Cys-183 are oxidised to a cystine. The active site involves Ser-369. N-linked (GlcNAc...) asparagine glycosylation is found at Asn-389, Asn-410, Asn-443, and Asn-486.

Belongs to the peptidase S12 family.

The protein resides in the secreted. It carries out the reaction a glycyl-glycyl-[protein] + H2O = N-terminal glycyl-[protein] + [protein]-C-terminal glycine. With respect to regulation, not inhibited by phenylmethylsulfonyl fluoride (PMSF; serine peptidase class S1 inhibitor), clavulanic acid (beta-lactamase inhibitor) or ampicillin (penicillin-binding protein (PBP) inhibitor). Serine-type endopeptidase that cleaves Gly-Gly bonds in the polyglycine linker of host plant class IV chitinases to disrupt their chitin-binding, and thereby plays a role in lowering the defense responses of the host to the fungus. Degrades Z.mays Endochitinase A (CHIA). Has low proteolytic activity on Z.mays Endochitinase B (CHIB). The protein is Polyglycine hydrolase of Cochliobolus carbonum (strain 26-R-13) (Maize leaf spot fungus).